Consider the following 211-residue polypeptide: Somatotropin (211 aa).

The N-terminal stretch at 1-23 (MASGFLLCPVLLAVFFMSPVEVG) is a signal peptide. Histidine 40 provides a ligand contact to Zn(2+). A disulfide bond links cysteine 73 and cysteine 184. Glutamate 193 is a Zn(2+) binding site. An intrachain disulfide couples cysteine 201 to cysteine 209.

Belongs to the somatotropin/prolactin family.

It localises to the secreted. Growth hormone plays an important role in growth control and is involved in the regulation of several anabolic processes. Implicated as an osmoregulatory substance important for seawater adaptation. The sequence is that of Somatotropin (gh) from Lepisosteus osseus (Long-nosed gar).